The following is a 74-amino-acid chain: ATP synthase F(1) complex subunit epsilon, mitochondrial (74 aa).

The protein belongs to the eukaryotic ATPase epsilon family. In terms of assembly, component of the ATP synthase complex composed at least of ATP5F1A/subunit alpha, ATP5F1B/subunit beta, ATP5MC1/subunit c (homooctomer), MT-ATP6/subunit a, MT-ATP8/subunit 8, ATP5ME/subunit e, ATP5MF/subunit f, ATP5MG/subunit g, ATP5MK/subunit k, ATP5MJ/subunit j, ATP5F1C/subunit gamma, ATP5F1D/subunit delta, ATP5F1E/subunit epsilon, ATP5PF/subunit F6, ATP5PB/subunit b, ATP5PD/subunit d, ATP5PO/subunit OSCP. ATP synthase complex consists of a soluble F(1) head domain (subunits alpha(3) and beta(3)) - the catalytic core - and a membrane F(0) domain - the membrane proton channel (subunits c, a, 8, e, f, g, k and j). These two domains are linked by a central stalk (subunits gamma, delta, and epsilon) rotating inside the F1 region and a stationary peripheral stalk (subunits F6, b, d, and OSCP).

It is found in the mitochondrion. Its subcellular location is the mitochondrion inner membrane. Its function is as follows. Subunit epsilon, of the mitochondrial membrane ATP synthase complex (F(1)F(0) ATP synthase or Complex V) that produces ATP from ADP in the presence of a proton gradient across the membrane which is generated by electron transport complexes of the respiratory chain. ATP synthase complex consist of a soluble F(1) head domain - the catalytic core - and a membrane F(1) domain - the membrane proton channel. These two domains are linked by a central stalk rotating inside the F(1) region and a stationary peripheral stalk. During catalysis, ATP synthesis in the catalytic domain of F(1) is coupled via a rotary mechanism of the central stalk subunits to proton translocation. In vivo, can only synthesize ATP although its ATP hydrolase activity can be activated artificially in vitro. May be essential for the assembly of F(1) and may play an important role in the incorporation of the hydrophobic subunit c into the F(1)-c oligomer rotor of the mitochondrial ATP synthase complex. This Dictyostelium discoideum (Social amoeba) protein is ATP synthase F(1) complex subunit epsilon, mitochondrial.